Consider the following 470-residue polypeptide: NADH-quinone oxidoreductase subunit D (470 aa).

Low complexity predominate over residues 1-18 (MTPSTSTPHTSTAPHTST). The segment at 1–37 (MTPSTSTPHTSTAPHTSTGQSTDGAAQPGDGSSAYEA) is disordered.

Belongs to the complex I 49 kDa subunit family. In terms of assembly, NDH-1 is composed of 14 different subunits. Subunits NuoB, C, D, E, F, and G constitute the peripheral sector of the complex.

Its subcellular location is the cell membrane. It carries out the reaction a quinone + NADH + 5 H(+)(in) = a quinol + NAD(+) + 4 H(+)(out). Its function is as follows. NDH-1 shuttles electrons from NADH, via FMN and iron-sulfur (Fe-S) centers, to quinones in the respiratory chain. The immediate electron acceptor for the enzyme in this species is believed to be a menaquinone. Couples the redox reaction to proton translocation (for every two electrons transferred, four hydrogen ions are translocated across the cytoplasmic membrane), and thus conserves the redox energy in a proton gradient. In Frankia alni (strain DSM 45986 / CECT 9034 / ACN14a), this protein is NADH-quinone oxidoreductase subunit D.